We begin with the raw amino-acid sequence, 126 residues long: MKGYIWGLISVLLVTIAQLLLKWGVVNLPALNLGLHWFDIEWLWSHRHSLVAVMAGLAGYLLSMLCWLFTLKYLPLNKAYPLISLSYVFVYLMVALLPWFNETITLLKTAGVIFILYGVWLISRPE.

The Cytoplasmic portion of the chain corresponds to 1–4 (MKGY). Residues 5–25 (IWGLISVLLVTIAQLLLKWGV) traverse the membrane as a helical segment. The Periplasmic segment spans residues 26–49 (VNLPALNLGLHWFDIEWLWSHRHS). A helical membrane pass occupies residues 50–70 (LVAVMAGLAGYLLSMLCWLFT). Topologically, residues 71-79 (LKYLPLNKA) are cytoplasmic. The helical transmembrane segment at 80–100 (YPLISLSYVFVYLMVALLPWF) threads the bilayer. The Periplasmic segment spans residues 101–102 (NE). Residues 103–123 (TITLLKTAGVIFILYGVWLIS) form a helical membrane-spanning segment. Over 124 to 126 (RPE) the chain is Cytoplasmic.

It belongs to the ArnF family. In terms of assembly, heterodimer of ArnE and ArnF.

It is found in the cell inner membrane. It participates in bacterial outer membrane biogenesis; lipopolysaccharide biosynthesis. Functionally, translocates 4-amino-4-deoxy-L-arabinose-phosphoundecaprenol (alpha-L-Ara4N-phosphoundecaprenol) from the cytoplasmic to the periplasmic side of the inner membrane. The chain is Probable 4-amino-4-deoxy-L-arabinose-phosphoundecaprenol flippase subunit ArnF from Photorhabdus laumondii subsp. laumondii (strain DSM 15139 / CIP 105565 / TT01) (Photorhabdus luminescens subsp. laumondii).